Consider the following 354-residue polypeptide: Ornithine transcarbamylase, mitochondrial (354 aa).

The transit peptide at 1–32 directs the protein to the mitochondrion; the sequence is MLSNLRILLNKAALRKAHTSMVRNFRYGKPVQ. Lys-70 carries the N6-acetyllysine; alternate modification. Lys-70 carries the N6-succinyllysine; alternate modification. Lys-80 carries the N6-succinyllysine modification. Position 88 is an N6-acetyllysine; alternate (Lys-88). Lys-88 carries the N6-succinyllysine; alternate modification. 90–93 is a binding site for carbamoyl phosphate; that stretch reads STRT. Ser-133 is subject to Phosphoserine. Arg-141 contributes to the carbamoyl phosphate binding site. Lys-144 is modified (N6-acetyllysine; alternate). Lys-144 bears the N6-succinyllysine; alternate mark. 2 residues coordinate carbamoyl phosphate: His-168 and Gln-171. Asn-199 is a binding site for L-ornithine. N6-acetyllysine; alternate occurs at positions 221, 231, and 238. N6-succinyllysine; alternate occurs at positions 221, 231, and 238. Positions 263, 267, and 268 each coordinate L-ornithine. An N6-succinyllysine mark is found at Lys-274 and Lys-289. Lys-292 bears the N6-acetyllysine; alternate mark. Position 292 is an N6-succinyllysine; alternate (Lys-292). The active-site Proton acceptor is Cys-303. Residue 303–304 participates in carbamoyl phosphate binding; it reads CL. The residue at position 307 (Lys-307) is an N6-acetyllysine; alternate. Position 307 is an N6-succinyllysine; alternate (Lys-307). Arg-330 is a binding site for carbamoyl phosphate.

The protein belongs to the aspartate/ornithine carbamoyltransferase superfamily. OTCase family. Homotrimer. In terms of processing, acetylation at Lys-88 negatively regulates ornithine carbamoyltransferase activity in response to nutrient signals.

Its subcellular location is the mitochondrion matrix. It carries out the reaction carbamoyl phosphate + L-ornithine = L-citrulline + phosphate + H(+). Its pathway is nitrogen metabolism; urea cycle; L-citrulline from L-ornithine and carbamoyl phosphate: step 1/1. Its activity is regulated as follows. Negatively regulated by lysine acetylation. Catalyzes the second step of the urea cycle, the condensation of carbamoyl phosphate with L-ornithine to form L-citrulline. The urea cycle ensures the detoxification of ammonia by converting it to urea for excretion. The polypeptide is Ornithine transcarbamylase, mitochondrial (Rattus norvegicus (Rat)).